Consider the following 291-residue polypeptide: Elongation factor Ts (291 aa).

An involved in Mg(2+) ion dislocation from EF-Tu region spans residues threonine 79–valine 82.

The protein belongs to the EF-Ts family.

Its subcellular location is the cytoplasm. Associates with the EF-Tu.GDP complex and induces the exchange of GDP to GTP. It remains bound to the aminoacyl-tRNA.EF-Tu.GTP complex up to the GTP hydrolysis stage on the ribosome. The chain is Elongation factor Ts from Jannaschia sp. (strain CCS1).